A 244-amino-acid polypeptide reads, in one-letter code: Probable transcriptional regulatory protein BT0025 (244 aa).

This sequence belongs to the TACO1 family.

The protein localises to the cytoplasm. This is Probable transcriptional regulatory protein BT0025 from Borrelia turicatae (strain 91E135).